We begin with the raw amino-acid sequence, 121 residues long: Large ribosomal subunit protein uL24 (121 aa).

Positions 1–30 (MVRIVSKQPRKQRKARYNAPNHTRGRFLSA) are disordered.

This sequence belongs to the universal ribosomal protein uL24 family. Part of the 50S ribosomal subunit.

In terms of biological role, one of two assembly initiator proteins, it binds directly to the 5'-end of the 23S rRNA, where it nucleates assembly of the 50S subunit. Functionally, located at the polypeptide exit tunnel on the outside of the subunit. This Methanoculleus marisnigri (strain ATCC 35101 / DSM 1498 / JR1) protein is Large ribosomal subunit protein uL24.